Reading from the N-terminus, the 272-residue chain is FAS1 domain-containing protein YDR262W (272 aa).

A signal peptide spans 1-26; that stretch reads MIFNLPVSVLLYFSLIWAMEPSFVRG. Positions 100–269 constitute an FAS1 domain; that stretch reads PLSLESKLSL…GVILMVDFTL (170 aa).

The protein resides in the vacuole. The polypeptide is FAS1 domain-containing protein YDR262W (Saccharomyces cerevisiae (strain ATCC 204508 / S288c) (Baker's yeast)).